The primary structure comprises 141 residues: Hemoglobin subunit alpha (141 aa).

Positions 1-141 (VLSGTDKSNI…VSTVLTSKYR (141 aa)) constitute a Globin domain. At Ser-3 the chain carries Phosphoserine. 2 positions are modified to N6-succinyllysine: Lys-7 and Lys-11. Position 16 is an N6-acetyllysine; alternate (Lys-16). Lys-16 bears the N6-succinyllysine; alternate mark. A Phosphotyrosine modification is found at Tyr-24. A Phosphoserine modification is found at Ser-35. Residue Lys-40 is modified to N6-succinyllysine. Phosphoserine is present on Ser-49. Residue His-58 participates in O2 binding. His-87 provides a ligand contact to heme b. Phosphoserine is present on Ser-102. Phosphothreonine is present on Thr-108. Ser-124 carries the post-translational modification Phosphoserine. Phosphothreonine occurs at positions 134 and 137. Ser-138 carries the post-translational modification Phosphoserine.

This sequence belongs to the globin family. Heterotetramer of two alpha chains and two beta chains. In terms of tissue distribution, red blood cells.

Involved in oxygen transport from the lung to the various peripheral tissues. In terms of biological role, hemopressin acts as an antagonist peptide of the cannabinoid receptor CNR1. Hemopressin-binding efficiently blocks cannabinoid receptor CNR1 and subsequent signaling. This is Hemoglobin subunit alpha (HBA) from Talpa europaea (European mole).